The following is a 384-amino-acid chain: Carbamoyl phosphate synthase small chain (384 aa).

The segment at 1–195 is CPSase; the sequence is MLPVLPPALL…LGRGHGTLAD (195 aa). 3 residues coordinate L-glutamine: Ser-50, Gly-247, and Gly-249. A Glutamine amidotransferase type-1 domain is found at 199–384; that stretch reads HVVAYDFGVK…RFVALMQERA (186 aa). Cys-275 serves as the catalytic Nucleophile. L-glutamine is bound by residues Leu-276, Gln-279, Asn-317, Gly-319, and Phe-320. Residues His-359 and Glu-361 contribute to the active site.

This sequence belongs to the CarA family. Composed of two chains; the small (or glutamine) chain promotes the hydrolysis of glutamine to ammonia, which is used by the large (or ammonia) chain to synthesize carbamoyl phosphate. Tetramer of heterodimers (alpha,beta)4.

The catalysed reaction is hydrogencarbonate + L-glutamine + 2 ATP + H2O = carbamoyl phosphate + L-glutamate + 2 ADP + phosphate + 2 H(+). It carries out the reaction L-glutamine + H2O = L-glutamate + NH4(+). It functions in the pathway amino-acid biosynthesis; L-arginine biosynthesis; carbamoyl phosphate from bicarbonate: step 1/1. The protein operates within pyrimidine metabolism; UMP biosynthesis via de novo pathway; (S)-dihydroorotate from bicarbonate: step 1/3. Its function is as follows. Small subunit of the glutamine-dependent carbamoyl phosphate synthetase (CPSase). CPSase catalyzes the formation of carbamoyl phosphate from the ammonia moiety of glutamine, carbonate, and phosphate donated by ATP, constituting the first step of 2 biosynthetic pathways, one leading to arginine and/or urea and the other to pyrimidine nucleotides. The small subunit (glutamine amidotransferase) binds and cleaves glutamine to supply the large subunit with the substrate ammonia. In Rubrivivax gelatinosus (strain NBRC 100245 / IL144), this protein is Carbamoyl phosphate synthase small chain.